Here is a 482-residue protein sequence, read N- to C-terminus: Vanillin dehydrogenase (482 aa).

228 to 233 provides a ligand contact to NAD(+); sequence GSTHVG. Active-site residues include glutamate 250 and cysteine 284.

Belongs to the aldehyde dehydrogenase family.

It carries out the reaction vanillin + NAD(+) + H2O = vanillate + NADH + 2 H(+). Catalyzes the NAD-dependent oxidation of vanillin to vanillic acid. This chain is Vanillin dehydrogenase (vdh), found in Pseudomonas fluorescens.